The following is a 99-amino-acid chain: Large ribosomal subunit protein uL23 (99 aa).

The protein belongs to the universal ribosomal protein uL23 family. Part of the 50S ribosomal subunit. Contacts protein L29, and trigger factor when it is bound to the ribosome.

One of the early assembly proteins it binds 23S rRNA. One of the proteins that surrounds the polypeptide exit tunnel on the outside of the ribosome. Forms the main docking site for trigger factor binding to the ribosome. In Magnetococcus marinus (strain ATCC BAA-1437 / JCM 17883 / MC-1), this protein is Large ribosomal subunit protein uL23.